A 240-amino-acid chain; its full sequence is Fibronectin type III domain-containing protein 5 (240 aa).

A compositionally biased stretch (gly residues) spans 1 to 10; that stretch reads MQAARGGAGR. The tract at residues 1-30 is disordered; the sequence is MQAARGGAGRPGREGRGLERECERSPGVGA. The segment covering 11–24 has biased composition (basic and acidic residues); that stretch reads PGREGRGLERECER. The Fibronectin type-III domain occupies 64–155; that stretch reads APVNVTVRHL…EPVLFKTPRE (92 aa). Residues Asn67 and Asn112 are each glycosylated (N-linked (GlcNAc...) asparagine). Residues 181–201 traverse the membrane as a helical segment; that stretch reads GEVLIIVVVLFMWAGVIALFC. The segment covering 210-221 has biased composition (basic and acidic residues); sequence NEPNNNKEKTKS. Positions 210–240 are disordered; sequence NEPNNNKEKTKSASETSTPEHQGGGLLRSKI. Residues 231-240 show a composition bias toward gly residues; sequence QGGGLLRSKI. The short motif at 238-240 is the Microbody targeting signal element; sequence SKI.

In terms of assembly, dimer; may exist in other oligomeric forms. Post-translationally, N-Glycosylated. The extracellular domain is cleaved and released from the cell membrane.

It is found in the cell membrane. It localises to the peroxisome membrane. The protein localises to the secreted. In terms of biological role, mediates beneficial effects of muscular exercise. Induces browning of white adipose tissue by stimulating UCP1 expression, at least in part, via the nuclear receptor PPARA. In Rattus norvegicus (Rat), this protein is Fibronectin type III domain-containing protein 5 (Fndc5).